The chain runs to 387 residues: Early growth response protein 3 (387 aa).

The segment at 241-283 (PGFGSLPQPPLTLKPIRPRKYPNRPSKTPLHERPHACPAEGCD) is disordered. Residues 269–283 (PLHERPHACPAEGCD) are compositionally biased toward basic and acidic residues. 3 consecutive C2H2-type zinc fingers follow at residues 275–299 (HACP…LRIH), 305–327 (FQCR…IRTH), and 333–355 (FACE…AKIH). The tract at residues 348 to 387 (RKRHAKIHLKQKEKKAEKGGAPSASSAPPVSLAPVVTTCA) is disordered. Residues 350–360 (RHAKIHLKQKE) are compositionally biased toward basic residues. The span at 368–387 (APSASSAPPVSLAPVVTTCA) shows a compositional bias: low complexity.

Belongs to the EGR C2H2-type zinc-finger protein family.

The protein localises to the nucleus. In terms of biological role, probable transcription factor involved in muscle spindle development. The sequence is that of Early growth response protein 3 (EGR3) from Homo sapiens (Human).